The primary structure comprises 471 residues: U1 small nuclear ribonucleoprotein 70 kDa (471 aa).

The disordered stretch occupies residues 48-78 (FEDPRDAPPPTRAETREERMERKRREKIERR). Residues 60–78 (AETREERMERKRREKIERR) are compositionally biased toward basic and acidic residues. Positions 92 to 205 (HNDQNAQGDA…GGGLGGTRRG (114 aa)) are required for interaction with U1 RNA. Positions 103–184 (KTLFVARVNY…RRVLVDVERG (82 aa)) constitute an RRM domain. A disordered region spans residues 190–471 (WRPRRLGGGL…NGYMMEPPME (282 aa)). The segment covering 195–204 (LGGGLGGTRR) has biased composition (gly residues). The span at 210-246 (NIRHSGRDDTSRYDERDRERERDRRERSREREKEPRE) shows a compositional bias: basic and acidic residues. A compositionally biased stretch (basic residues) spans 247–261 (RRRSRSRERRRKSRS). The segment covering 262-288 (REKEERKRTREKSKDKDKEKDKDNKDR) has biased composition (basic and acidic residues). Positions 289–298 (DRKRRSRSRE) are enriched in basic residues. The span at 299–316 (RKRERDRDREKKEERVEA) shows a compositional bias: basic and acidic residues. Over residues 317-326 (EVPEADDAPQ) the composition is skewed to acidic residues. Residues 339 to 428 (IELKQEPEEK…RSEKREERVP (90 aa)) are compositionally biased toward basic and acidic residues.

In terms of assembly, component of the U1 snRNP. The U1 snRNP is composed of the U1 snRNA and the 7 core Sm proteins snrpb, snrpd1, snrpd2, snrpd3, snrpe, snrpf and snrpg that assemble in a heptameric protein ring on the Sm site of the small nuclear RNA to form the core snRNP, and at least three U1 snRNP-specific proteins snrnp70/U1-70K, snrpa/U1-A and snrpc/U1-C.

It is found in the nucleus speckle. Its subcellular location is the nucleus. The protein localises to the nucleoplasm. In terms of biological role, component of the spliceosomal U1 snRNP, which is essential for recognition of the pre-mRNA 5' splice-site and the subsequent assembly of the spliceosome. snrnp70 binds to the loop I region of U1-snRNA. The sequence is that of U1 small nuclear ribonucleoprotein 70 kDa (snrnp70) from Xenopus laevis (African clawed frog).